We begin with the raw amino-acid sequence, 257 residues long: Pyridoxal phosphate homeostasis protein (257 aa).

Residue K47 is modified to N6-(pyridoxal phosphate)lysine.

Belongs to the pyridoxal phosphate-binding protein YggS/PROSC family.

In terms of biological role, pyridoxal 5'-phosphate (PLP)-binding protein, which is involved in PLP homeostasis. In Mycobacterium leprae (strain TN), this protein is Pyridoxal phosphate homeostasis protein.